The chain runs to 151 residues: Ribosome maturation factor RimP (151 aa).

This sequence belongs to the RimP family.

It is found in the cytoplasm. In terms of biological role, required for maturation of 30S ribosomal subunits. This Vibrio parahaemolyticus serotype O3:K6 (strain RIMD 2210633) protein is Ribosome maturation factor RimP.